We begin with the raw amino-acid sequence, 469 residues long: 3-isopropylmalate dehydratase large subunit (469 aa).

[4Fe-4S] cluster is bound by residues C347, C408, and C411.

It belongs to the aconitase/IPM isomerase family. LeuC type 1 subfamily. Heterodimer of LeuC and LeuD. Requires [4Fe-4S] cluster as cofactor.

The catalysed reaction is (2R,3S)-3-isopropylmalate = (2S)-2-isopropylmalate. The protein operates within amino-acid biosynthesis; L-leucine biosynthesis; L-leucine from 3-methyl-2-oxobutanoate: step 2/4. Functionally, catalyzes the isomerization between 2-isopropylmalate and 3-isopropylmalate, via the formation of 2-isopropylmaleate. This chain is 3-isopropylmalate dehydratase large subunit, found in Actinobacillus pleuropneumoniae serotype 5b (strain L20).